We begin with the raw amino-acid sequence, 312 residues long: Cathepsin O (312 aa).

The signal sequence occupies residues 1-23; sequence MKPQLVNLLLLCCCCLGRHGVAG. Positions 24-98 are cleaved as a propeptide — activation peptide; it reads TWSWSHQREA…EGQRPIPNVS (75 aa). N-linked (GlcNAc...) asparagine glycosylation is found at N53 and N96. 3 disulfides stabilise this stretch: C120/C161, C154/C195, and C253/C301. C123 is an active-site residue. Catalysis depends on residues H260 and N280.

Belongs to the peptidase C1 family.

It localises to the lysosome. The enzyme catalyses The recombinant human enzyme hydrolyzes synthetic endopeptidase substrates including Z-Phe-Arg-NHMec and Z-Arg-Arg-NHMec.. Functionally, proteolytic enzyme possibly involved in normal cellular protein degradation and turnover. This is Cathepsin O (Ctso) from Mus musculus (Mouse).